The sequence spans 94 residues: Protein RESPONSE TO LOW SULFUR 2 (94 aa).

The stretch at 15-63 forms a coiled coil; sequence VDELRRKNGEMEKAVEEMKKEMLQLWRRTQVAEEAEERLCSQLAELEAE.

Its function is as follows. May be involved in defense responses monitoring. Probably implicated into osmotic stress signaling. The chain is Protein RESPONSE TO LOW SULFUR 2 from Arabidopsis thaliana (Mouse-ear cress).